The following is a 718-amino-acid chain: Catalase (718 aa).

Active-site residues include His-103 and Asn-176. Residue Tyr-390 participates in heme binding.

Belongs to the catalase family. Heme serves as cofactor.

It localises to the peroxisome matrix. The enzyme catalyses 2 H2O2 = O2 + 2 H2O. In terms of biological role, catalyzes the degradation of hydrogen peroxide (H(2)O(2)) generated by peroxisomal oxidases to water and oxygen, thereby protecting cells from the toxic effects of hydrogen peroxide. The sequence is that of Catalase (CAT1) from Blumeria hordei (Barley powdery mildew).